We begin with the raw amino-acid sequence, 339 residues long: Ketol-acid reductoisomerase (NADP(+)) (339 aa).

The KARI N-terminal Rossmann domain maps to 1-182 (MRVYYDRDAD…GGGRAGVIET (182 aa)). NADP(+)-binding positions include 24-27 (YGSQ), Arg48, Ser51, Thr53, and 83-86 (DELQ). His108 is a catalytic residue. Gly134 lines the NADP(+) pocket. Residues 183 to 328 (TFKEECETDL…EKLRAMMPWI (146 aa)) form the KARI C-terminal knotted domain. The Mg(2+) site is built by Asp191, Glu195, Glu227, and Glu231. Position 252 (Ser252) interacts with substrate.

The protein belongs to the ketol-acid reductoisomerase family. Mg(2+) is required as a cofactor.

The enzyme catalyses (2R)-2,3-dihydroxy-3-methylbutanoate + NADP(+) = (2S)-2-acetolactate + NADPH + H(+). It carries out the reaction (2R,3R)-2,3-dihydroxy-3-methylpentanoate + NADP(+) = (S)-2-ethyl-2-hydroxy-3-oxobutanoate + NADPH + H(+). It participates in amino-acid biosynthesis; L-isoleucine biosynthesis; L-isoleucine from 2-oxobutanoate: step 2/4. Its pathway is amino-acid biosynthesis; L-valine biosynthesis; L-valine from pyruvate: step 2/4. In terms of biological role, involved in the biosynthesis of branched-chain amino acids (BCAA). Catalyzes an alkyl-migration followed by a ketol-acid reduction of (S)-2-acetolactate (S2AL) to yield (R)-2,3-dihydroxy-isovalerate. In the isomerase reaction, S2AL is rearranged via a Mg-dependent methyl migration to produce 3-hydroxy-3-methyl-2-ketobutyrate (HMKB). In the reductase reaction, this 2-ketoacid undergoes a metal-dependent reduction by NADPH to yield (R)-2,3-dihydroxy-isovalerate. The protein is Ketol-acid reductoisomerase (NADP(+)) of Xanthobacter autotrophicus (strain ATCC BAA-1158 / Py2).